The sequence spans 307 residues: Small ribosomal subunit biogenesis GTPase RsgA (307 aa).

Residues 1-20 (MPSEHPFSDGISTPNPKETM) form a disordered region. Residues 10-20 (GISTPNPKETM) are compositionally biased toward polar residues. Residues 85 to 242 (RQDAWKTKLI…LIDSPGLQEF (158 aa)) enclose the CP-type G domain. GTP-binding positions include 135 to 138 (NKAD) and 184 to 192 (GQSGMGKST). Zn(2+) is bound by residues Cys-266, Cys-271, His-273, and Cys-279.

This sequence belongs to the TRAFAC class YlqF/YawG GTPase family. RsgA subfamily. In terms of assembly, monomer. Associates with 30S ribosomal subunit, binds 16S rRNA. Zn(2+) serves as cofactor.

Its subcellular location is the cytoplasm. One of several proteins that assist in the late maturation steps of the functional core of the 30S ribosomal subunit. Helps release RbfA from mature subunits. May play a role in the assembly of ribosomal proteins into the subunit. Circularly permuted GTPase that catalyzes slow GTP hydrolysis, GTPase activity is stimulated by the 30S ribosomal subunit. In Neisseria meningitidis serogroup A / serotype 4A (strain DSM 15465 / Z2491), this protein is Small ribosomal subunit biogenesis GTPase RsgA.